The primary structure comprises 200 residues: NADH-quinone oxidoreductase subunit B (200 aa).

[4Fe-4S] cluster-binding residues include C78, C79, C144, and C174.

Belongs to the complex I 20 kDa subunit family. NDH-1 is composed of 14 different subunits. Subunits NuoB, C, D, E, F, and G constitute the peripheral sector of the complex. [4Fe-4S] cluster is required as a cofactor.

The protein localises to the cell membrane. It carries out the reaction a quinone + NADH + 5 H(+)(in) = a quinol + NAD(+) + 4 H(+)(out). NDH-1 shuttles electrons from NADH, via FMN and iron-sulfur (Fe-S) centers, to quinones in the respiratory chain. The immediate electron acceptor for the enzyme in this species is believed to be ubiquinone. Couples the redox reaction to proton translocation (for every two electrons transferred, four hydrogen ions are translocated across the cytoplasmic membrane), and thus conserves the redox energy in a proton gradient. This Dehalococcoides mccartyi (strain ATCC BAA-2100 / JCM 16839 / KCTC 5957 / BAV1) protein is NADH-quinone oxidoreductase subunit B.